The following is a 490-amino-acid chain: Probable cytosol aminopeptidase (490 aa).

Mn(2+)-binding residues include lysine 257 and aspartate 262. Lysine 269 is a catalytic residue. Aspartate 281, aspartate 341, and glutamate 343 together coordinate Mn(2+). Arginine 345 is a catalytic residue.

This sequence belongs to the peptidase M17 family. Mn(2+) is required as a cofactor.

It localises to the cytoplasm. The enzyme catalyses Release of an N-terminal amino acid, Xaa-|-Yaa-, in which Xaa is preferably Leu, but may be other amino acids including Pro although not Arg or Lys, and Yaa may be Pro. Amino acid amides and methyl esters are also readily hydrolyzed, but rates on arylamides are exceedingly low.. The catalysed reaction is Release of an N-terminal amino acid, preferentially leucine, but not glutamic or aspartic acids.. Presumably involved in the processing and regular turnover of intracellular proteins. Catalyzes the removal of unsubstituted N-terminal amino acids from various peptides. The protein is Probable cytosol aminopeptidase of Prochlorococcus marinus (strain MIT 9312).